Reading from the N-terminus, the 1007-residue chain is Glutamate receptor ionotropic, delta-2 (1007 aa).

The signal sequence occupies residues 1 to 23 (MEVFPLLFFLSFWWSRTWDLATS). Residues 24 to 345 (DSIIHIGAIF…NAFHKKLEDR (322 aa)) form an interaction with CBLN1 homotrimer region. The Extracellular portion of the chain corresponds to 24 to 566 (DSIIHIGAIF…DMFACLAPFD (543 aa)). Disulfide bonds link Cys-83–Cys-355, Cys-99–Cys-131, and Cys-298–Cys-310. Asn-293 carries an N-linked (GlcNAc...) asparagine glycan. N-linked (GlcNAc...) asparagine glycosylation is present at Asn-426. The chain crosses the membrane as a helical span at residues 567 to 587 (LSLWACIAGTVLLVGLLVYLL). Topologically, residues 588–635 (NWLNPPRLQMGSMTSTTLYNSMWFVYGSFVQQGGEVPYTTLATRMMMG) are cytoplasmic. Residues 636–656 (AWWLFALIVISSYTANLAAFL) traverse the membrane as a helical segment. The Extracellular portion of the chain corresponds to 657–830 (TITRIESSIQ…QKGGALDIKS (174 aa)). Asn-713 and Asn-716 each carry an N-linked (GlcNAc...) asparagine glycan. The helical transmembrane segment at 831–851 (LAGVFCILAAGIVLSCLIAVL) threads the bilayer. Topologically, residues 852–1007 (ETWWSRRKGS…GNDPDRGTSI (156 aa)) are cytoplasmic. Ser-883 carries the post-translational modification Phosphoserine. Thr-886 is modified (phosphothreonine). A Phosphoserine modification is found at Ser-890. The segment at 921 to 991 (DFRNTHITTT…MSSIPYQPTP (71 aa)) is interaction with AP4M1. The short motif at 1005-1007 (TSI) is the PDZ-binding element. Position 1006 is a phosphoserine (Ser-1006).

It belongs to the glutamate-gated ion channel (TC 1.A.10.1) family. GRID2 subfamily. As to quaternary structure, tetramer; dimer of dimers. Interacts with AP4M1. Interacts with EML2. Interacts with MAGI2 (via PDZ domains). Interacts with BECN1, GOPC, GRID2IP, SHANK1 and SHANK2. Interacts with CBLN2, but not with CBLN4. Interacts with CBLN1 (via C1q domain); the interaction is CBLN1-NRX1 complex formation-dependent; CBLN1-binding is calcium-independent; CBLN1 hexamers anchor GRID2 N-terminal domain dimers to monomeric NRXN1 isoform beta; promotes synaptogenesis and mediates the D-Serine-dependent long term depression signals and AMPA receptor endocytosis. In terms of tissue distribution, expressed at high levels in the cerebellar Purkinje cell layer, almost absent in the forebrain.

It localises to the postsynaptic cell membrane. It catalyses the reaction Ca(2+)(in) = Ca(2+)(out). The enzyme catalyses Na(+)(in) = Na(+)(out). Its function is as follows. Member of the ionotropic glutamate receptor family, which plays a crucial role in synaptic organization and signal transduction in the central nervous system. Although it shares structural features with ionotropic glutamate receptors, does not bind glutamate as a primary ligand. Promotes synaptogenesis and mediates the D-Serine-dependent long term depression signals and AMPA receptor endocytosis of cerebellar parallel fiber-Purkinje cell (PF-PC) synapses through the NRX1B-CBLN1-GRID2 triad complex. In the presence of neurexins and cerebellins, forms cation-selective channels that are proposed to be gated by glycine and D-serine. However, recent research disputes this ligand-gated cation channel activity. Cation-selective ion channel activity can be triggered by GRM1 in Purkinje cells. The polypeptide is Glutamate receptor ionotropic, delta-2 (Grid2) (Rattus norvegicus (Rat)).